The primary structure comprises 749 residues: Subtilisin-like protease SBT4.14 (749 aa).

Residues 1-28 form the signal peptide; that stretch reads MIRSKCSCHHHLLVLVMVVLWISPRYAS. A propeptide spans 29 to 115 (activation peptide); sequence AEDEHAKDFY…VSRNQYRKLH (87 aa). The 78-residue stretch at 38–115 folds into the Inhibitor I9 domain; it reads YIIYLGDRPD…VSRNQYRKLH (78 aa). Residues 119 to 595 enclose the Peptidase S8 domain; it reads SWDFVGLPLT…GGQINPRRAA (477 aa). The active-site Charge relay system is Asp145. N-linked (GlcNAc...) asparagine glycosylation is present at Asn176. His210 functions as the Charge relay system in the catalytic mechanism. Residues Asn225, Asn233, Asn446, and Asn458 are each glycosylated (N-linked (GlcNAc...) asparagine). Ser536 serves as the catalytic Charge relay system. N-linked (GlcNAc...) asparagine glycosylation is present at Asn618.

Belongs to the peptidase S8 family. In terms of processing, the C-terminal propeptide is autocleaved. In terms of tissue distribution, expressed only in roots, particularly in xylem.

This chain is Subtilisin-like protease SBT4.14, found in Arabidopsis thaliana (Mouse-ear cress).